Reading from the N-terminus, the 573-residue chain is Peptidyl-prolyl cis-trans isomerase-like 2 (573 aa).

One can recognise a U-box domain in the interval 37 to 119 (QRLPFDCCAL…GNLHDPITYK (83 aa)). The segment at 223–247 (KNKSGQSPAPTPSKIDDGKGQEKKE) is disordered. A compositionally biased stretch (basic and acidic residues) spans 236 to 247 (KIDDGKGQEKKE). The region spanning 312–469 (SKAYATITTN…RDIVIQGVTV (158 aa)) is the PPIase cyclophilin-type domain. A compositionally biased stretch (basic and acidic residues) spans 489–510 (DQSDAALKRRAEAQKEREKDRT). The tract at residues 489 to 515 (DQSDAALKRRAEAQKEREKDRTTWLGT) is disordered.

This sequence belongs to the cyclophilin-type PPIase family. PPIL2 subfamily.

Its subcellular location is the nucleus. The catalysed reaction is [protein]-peptidylproline (omega=180) = [protein]-peptidylproline (omega=0). The enzyme catalyses S-ubiquitinyl-[E2 ubiquitin-conjugating enzyme]-L-cysteine + [acceptor protein]-L-lysine = [E2 ubiquitin-conjugating enzyme]-L-cysteine + N(6)-ubiquitinyl-[acceptor protein]-L-lysine.. It functions in the pathway protein modification; protein ubiquitination. In terms of biological role, may catalyze the cis-trans isomerization of proline imidic peptide bonds in oligopeptides thereby assisting the folding of proteins. May also function as a chaperone, playing a role in intracellular transport of proteins. May also have a protein ubiquitin ligase activity acting as an E3 ubiquitin protein ligase or as a ubiquitin-ubiquitin ligase promoting elongation of ubiquitin chains on proteins. This chain is Peptidyl-prolyl cis-trans isomerase-like 2 (CYP8), found in Cryptococcus neoformans var. neoformans serotype D (strain B-3501A) (Filobasidiella neoformans).